A 323-amino-acid polypeptide reads, in one-letter code: Lipoyl synthase (323 aa).

Residues Cys-53, Cys-58, Cys-64, Cys-79, Cys-83, Cys-86, and Ser-293 each coordinate [4Fe-4S] cluster. Positions 65–282 (WTKKQATVMI…AATARAKGFS (218 aa)) constitute a Radical SAM core domain.

Belongs to the radical SAM superfamily. Lipoyl synthase family. [4Fe-4S] cluster serves as cofactor.

It is found in the cytoplasm. It carries out the reaction [[Fe-S] cluster scaffold protein carrying a second [4Fe-4S](2+) cluster] + N(6)-octanoyl-L-lysyl-[protein] + 2 oxidized [2Fe-2S]-[ferredoxin] + 2 S-adenosyl-L-methionine + 4 H(+) = [[Fe-S] cluster scaffold protein] + N(6)-[(R)-dihydrolipoyl]-L-lysyl-[protein] + 4 Fe(3+) + 2 hydrogen sulfide + 2 5'-deoxyadenosine + 2 L-methionine + 2 reduced [2Fe-2S]-[ferredoxin]. It participates in protein modification; protein lipoylation via endogenous pathway; protein N(6)-(lipoyl)lysine from octanoyl-[acyl-carrier-protein]: step 2/2. Catalyzes the radical-mediated insertion of two sulfur atoms into the C-6 and C-8 positions of the octanoyl moiety bound to the lipoyl domains of lipoate-dependent enzymes, thereby converting the octanoylated domains into lipoylated derivatives. The protein is Lipoyl synthase of Zymomonas mobilis subsp. mobilis (strain ATCC 31821 / ZM4 / CP4).